The primary structure comprises 276 residues: Urease accessory protein UreD (276 aa).

It belongs to the UreD family. UreD, UreF and UreG form a complex that acts as a GTP-hydrolysis-dependent molecular chaperone, activating the urease apoprotein by helping to assemble the nickel containing metallocenter of UreC. The UreE protein probably delivers the nickel.

It is found in the cytoplasm. Its function is as follows. Required for maturation of urease via the functional incorporation of the urease nickel metallocenter. This chain is Urease accessory protein UreD, found in Bradyrhizobium diazoefficiens (strain JCM 10833 / BCRC 13528 / IAM 13628 / NBRC 14792 / USDA 110).